The following is a 74-amino-acid chain: Putative membrane protein insertion efficiency factor (74 aa).

Belongs to the UPF0161 family.

The protein localises to the cell membrane. Functionally, could be involved in insertion of integral membrane proteins into the membrane. The polypeptide is Putative membrane protein insertion efficiency factor (Bacillus pumilus (strain SAFR-032)).